The chain runs to 327 residues: DNA-directed RNA polymerase subunit alpha (327 aa).

Residues 1–233 (MVREKVKVST…NLFIPFLHVE (233 aa)) form an alpha N-terminal domain (alpha-NTD) region. The tract at residues 267–327 (LAFQYIFIDQ…KKILDILEKK (61 aa)) is alpha C-terminal domain (alpha-CTD).

Belongs to the RNA polymerase alpha chain family. In terms of assembly, in plastids the minimal PEP RNA polymerase catalytic core is composed of four subunits: alpha, beta, beta', and beta''. When a (nuclear-encoded) sigma factor is associated with the core the holoenzyme is formed, which can initiate transcription.

The protein resides in the plastid. The protein localises to the chloroplast. It carries out the reaction RNA(n) + a ribonucleoside 5'-triphosphate = RNA(n+1) + diphosphate. In terms of biological role, DNA-dependent RNA polymerase catalyzes the transcription of DNA into RNA using the four ribonucleoside triphosphates as substrates. In Nasturtium officinale (Watercress), this protein is DNA-directed RNA polymerase subunit alpha.